The primary structure comprises 311 residues: Methionyl-tRNA formyltransferase (311 aa).

110-113 (SLLP) is a (6S)-5,6,7,8-tetrahydrofolate binding site.

The protein belongs to the Fmt family.

It catalyses the reaction L-methionyl-tRNA(fMet) + (6R)-10-formyltetrahydrofolate = N-formyl-L-methionyl-tRNA(fMet) + (6S)-5,6,7,8-tetrahydrofolate + H(+). Attaches a formyl group to the free amino group of methionyl-tRNA(fMet). The formyl group appears to play a dual role in the initiator identity of N-formylmethionyl-tRNA by promoting its recognition by IF2 and preventing the misappropriation of this tRNA by the elongation apparatus. This Streptococcus pneumoniae serotype 2 (strain D39 / NCTC 7466) protein is Methionyl-tRNA formyltransferase.